The chain runs to 348 residues: Rhodopsin (348 aa).

The residue at position 1 (methionine 1) is an N-acetylmethionine. The Extracellular segment spans residues 1-36 (MNGTEGPNFYVPFSNKTGVVRSPFEYPQYYLAEPWQ). N-linked (GlcNAc...) asparagine glycans are attached at residues asparagine 2 and asparagine 15. Residues 37-61 (FSMLAAYMFLLIVLGFPINFLTLYV) form a helical membrane-spanning segment. At 62-73 (TVQHKKLRTPLN) the chain is on the cytoplasmic side. Residues 74-96 (YILLNLAVADLFMVFGGFTTTLY) form a helical membrane-spanning segment. Over 97–110 (TSLHGYFVFGPTGC) the chain is Extracellular. Cysteine 110 and cysteine 187 are oxidised to a cystine. A helical membrane pass occupies residues 111–133 (NVEGFFATLGGEIALWSLVVLAI). The short motif at 134 to 136 (ERY) is the 'Ionic lock' involved in activated form stabilization element. At 134-152 (ERYVVVCKPMSNFRFGENH) the chain is on the cytoplasmic side. Residues 153–173 (AIMGVAFTWVMALACAAPPLA) form a helical membrane-spanning segment. The Extracellular portion of the chain corresponds to 174–202 (GWSRYIPEGMQCSCGIDYYTLKPEINNES). Residue glutamate 201 participates in Zn(2+) binding. Residues 203–224 (FVIYMFVVHFAIPMIVIFFCYG) form a helical membrane-spanning segment. Residues 225 to 252 (QLVFTVKEAAAQQQESATTQKAEKEVTR) are Cytoplasmic-facing. A helical transmembrane segment spans residues 253–274 (MVIIMVIAFLICWVPYASVAFY). Over 275–286 (IFTHQGSDFGPI) the chain is Extracellular. Zn(2+) is bound at residue glutamine 279. A helical membrane pass occupies residues 287-308 (FMTLPAFFAKSSSIYNPVIYIM). Lysine 296 is subject to N6-(retinylidene)lysine. Over 309–348 (MNKQFRNCMITTLCCGKNPLGDDEASASASKTETSQVAPA) the chain is Cytoplasmic. 2 S-palmitoyl cysteine lipidation sites follow: cysteine 322 and cysteine 323. Residues 330-348 (DDEASASASKTETSQVAPA) form an interaction with SAG region. Serine 334 and serine 338 each carry phosphoserine. A phosphothreonine mark is found at threonine 340 and threonine 342. Serine 343 is modified (phosphoserine).

This sequence belongs to the G-protein coupled receptor 1 family. Opsin subfamily. Homodimer. May form a complex composed of RHO, GRK1 and RCVRN in a Ca(2+)-dependent manner; RCVRN prevents the interaction between GRK1 and RHO. Interacts with GRK1. Interacts (phosphorylated form) with SAG. Interacts with GNAT1. Interacts with GNAT3. SAG and G-proteins compete for a common binding site. Interacts with PRCD; the interaction promotes PRCD stability. Forms a complex with ASAP1 and ARF4. Forms a complex with ASAP1, RAB11A, Rabin8/RAB3IP, ARF4 and RAB11FIP3; the complex regulates Golgi-to-cilia rhodopsin/RHO transport in photoreceptors. Phosphorylated on some or all of the serine and threonine residues present in the C-terminal region. Post-translationally, contains one covalently linked retinal chromophore. Upon light absorption, the covalently bound 11-cis-retinal is converted to all-trans-retinal. After hydrolysis of the Schiff base and release of the covalently bound all-trans-retinal, active rhodopsin is regenerated by binding of a fresh molecule of 11-cis-retinal.

The protein localises to the membrane. The protein resides in the cell projection. Its subcellular location is the cilium. It is found in the photoreceptor outer segment. In terms of biological role, photoreceptor required for image-forming vision at low light intensity. Required for photoreceptor cell viability after birth. Light-induced isomerization of 11-cis to all-trans retinal triggers a conformational change that activates signaling via G-proteins. Subsequent receptor phosphorylation mediates displacement of the bound G-protein alpha subunit by the arrestin SAG and terminates signaling. The chain is Rhodopsin (RHO) from Canis lupus familiaris (Dog).